A 361-amino-acid polypeptide reads, in one-letter code: MDVAALVSGGVDSSVVVHRLCEEGYKPAIFYIRIGMEDEDGYIDCPAEEDIELTTLIARRYGCPFEVVDLHKEYWERVVSYTVETVRRGLTPNPDMMCNKLIKFGCFEERWGYQFDRIATGHYATTDLLNGKTYLSTAKDPVKDQTDFLAQINFAQISKLMFPIGHLLKSEVRAIANAAGLPSAKRKDSQGICFLGKIDYNDFIERYLGKKEGRIIELETGKVIGRHQGYWFHTIGQRKGLGLSGGPWFVVKKDIKRNIILVSRGYDPDTQYGKTIEMETFDFITEDAYEAGYWNREDATPVTFKIRHTPEFTRGLLYKGEKGYRLESEERIQGIAPGQYCVIYDEDHHLCYGSGMITKGR.

ATP contacts are provided by residues 6–13 (LVSGGVDS) and Ile32. The interval 93–95 (NPD) is interaction with target base in tRNA. The active-site Nucleophile is Cys98. A disulfide bond links Cys98 and Cys193. An ATP-binding site is contributed by Gly121. The segment at 143–145 (KDQ) is interaction with tRNA. The active-site Cysteine persulfide intermediate is the Cys193.

It belongs to the MnmA/TRMU family.

The protein localises to the cytoplasm. The catalysed reaction is S-sulfanyl-L-cysteinyl-[protein] + uridine(34) in tRNA + AH2 + ATP = 2-thiouridine(34) in tRNA + L-cysteinyl-[protein] + A + AMP + diphosphate + H(+). Catalyzes the 2-thiolation of uridine at the wobble position (U34) of tRNA, leading to the formation of s(2)U34. This Porphyromonas gingivalis (strain ATCC 33277 / DSM 20709 / CIP 103683 / JCM 12257 / NCTC 11834 / 2561) protein is tRNA-specific 2-thiouridylase MnmA.